The chain runs to 70 residues: Exodeoxyribonuclease 7 small subunit (70 aa).

This sequence belongs to the XseB family. As to quaternary structure, heterooligomer composed of large and small subunits.

The protein resides in the cytoplasm. The enzyme catalyses Exonucleolytic cleavage in either 5'- to 3'- or 3'- to 5'-direction to yield nucleoside 5'-phosphates.. Its function is as follows. Bidirectionally degrades single-stranded DNA into large acid-insoluble oligonucleotides, which are then degraded further into small acid-soluble oligonucleotides. The sequence is that of Exodeoxyribonuclease 7 small subunit from Streptococcus gordonii (strain Challis / ATCC 35105 / BCRC 15272 / CH1 / DL1 / V288).